Here is a 116-residue protein sequence, read N- to C-terminus: Beta-D-galactosidase Rv1717 (116 aa).

The 68-residue stretch at 40 to 107 (LSVYRPGGTA…TDRQALLLVT (68 aa)) folds into the Cupin type-2 domain.

The protein localises to the secreted. It is found in the cell wall. The enzyme catalyses Hydrolysis of terminal non-reducing beta-D-galactose residues in beta-D-galactosides.. Beta-galactosidase activity is activated by Mg(2+) and significantly inhibited by Ca(2+), Cd(2+), Fe(2+), Ni(2+), Cu(2+) and Zn(2+). Inhibited by EDTA. Functionally, beta-D-galactopyranosidase that specifically recognizes the beta-glycosidic bonds formed with beta-D-galactopyranose (beta-D-Gal) or N-acetylgalactosamine (beta-D-GalNAc). May target the galactoside linkages in the exopolysaccharide component of the mycobacterial extracellular polymeric substance (EPS) and help dispersal of Mtb bacteria from a deteriorating biofilm. The protein is Beta-D-galactosidase Rv1717 of Mycobacterium tuberculosis (strain ATCC 25618 / H37Rv).